A 294-amino-acid polypeptide reads, in one-letter code: tRNA pseudouridine synthase B (294 aa).

Catalysis depends on aspartate 39, which acts as the Nucleophile.

It belongs to the pseudouridine synthase TruB family. Type 1 subfamily.

The catalysed reaction is uridine(55) in tRNA = pseudouridine(55) in tRNA. In terms of biological role, responsible for synthesis of pseudouridine from uracil-55 in the psi GC loop of transfer RNAs. The sequence is that of tRNA pseudouridine synthase B from Streptococcus pyogenes serotype M28 (strain MGAS6180).